Reading from the N-terminus, the 308-residue chain is 4-hydroxy-tetrahydrodipicolinate synthase (308 aa).

Residue T56 participates in pyruvate binding. Y144 acts as the Proton donor/acceptor in catalysis. The active-site Schiff-base intermediate with substrate is the K172. Residue V212 participates in pyruvate binding.

Belongs to the DapA family. Homotetramer; dimer of dimers.

The protein localises to the cytoplasm. It catalyses the reaction L-aspartate 4-semialdehyde + pyruvate = (2S,4S)-4-hydroxy-2,3,4,5-tetrahydrodipicolinate + H2O + H(+). The protein operates within amino-acid biosynthesis; L-lysine biosynthesis via DAP pathway; (S)-tetrahydrodipicolinate from L-aspartate: step 3/4. In terms of biological role, catalyzes the condensation of (S)-aspartate-beta-semialdehyde [(S)-ASA] and pyruvate to 4-hydroxy-tetrahydrodipicolinate (HTPA). The protein is 4-hydroxy-tetrahydrodipicolinate synthase of Kineococcus radiotolerans (strain ATCC BAA-149 / DSM 14245 / SRS30216).